The following is a 466-amino-acid chain: Argininosuccinate lyase (466 aa).

The protein belongs to the lyase 1 family. Argininosuccinate lyase subfamily.

It is found in the cytoplasm. It catalyses the reaction 2-(N(omega)-L-arginino)succinate = fumarate + L-arginine. It participates in amino-acid biosynthesis; L-arginine biosynthesis; L-arginine from L-ornithine and carbamoyl phosphate: step 3/3. This Syntrophobacter fumaroxidans (strain DSM 10017 / MPOB) protein is Argininosuccinate lyase.